We begin with the raw amino-acid sequence, 23 residues long: Keratin (23 aa).

The IF rod domain maps to 1 to 23 (YSSQLAQVQGLIGNVESQLAEIR). The interval 1–23 (YSSQLAQVQGLIGNVESQLAEIR) is coil 2.

Belongs to the intermediate filament family.

The sequence is that of Keratin from Cervus elaphus (Red deer).